Consider the following 211-residue polypeptide: Probable GTP-binding protein EngB (211 aa).

One can recognise an EngB-type G domain in the interval 21-205 (LMATIVFVGR…KNRIYEIIRE (185 aa)). Residues 29 to 36 (GRSNVGKS), 54 to 58 (GVTRK), 71 to 74 (DMPG), 151 to 154 (NKLD), and 184 to 186 (ISA) contribute to the GTP site. Mg(2+)-binding residues include Ser-36 and Thr-56.

Belongs to the TRAFAC class TrmE-Era-EngA-EngB-Septin-like GTPase superfamily. EngB GTPase family. The cofactor is Mg(2+).

In terms of biological role, necessary for normal cell division and for the maintenance of normal septation. This is Probable GTP-binding protein EngB from Pyrococcus abyssi (strain GE5 / Orsay).